Reading from the N-terminus, the 269-residue chain is MFDFMTLEKVWEKGPLVHNITNIVVANDSANGLLAIGASPIMGSAKEEMDELAKMADVLVINIGTLDGELVTAMKIAGRAANVAGTPVVLDPVGVGATSYRRKVVQELLAEIQFTAIRGNAGELAAIAGEAWEAKGVDAGVGSADVLSIAEKVANEWSTVVIISGEVDVISDGTRFAKVANGSALLPRITGSGCLLSAVCGSFMAVQDDAFRASVEACASYAVASEYAEIELERKLPGSFRPQFLDALASWSVEKTRAKAKIQESGEHK.

Substrate is bound at residue Met-42. ATP is bound by residues Arg-118 and Ser-164. Gly-191 is a binding site for substrate.

It belongs to the Thz kinase family. The cofactor is Mg(2+).

It catalyses the reaction 5-(2-hydroxyethyl)-4-methylthiazole + ATP = 4-methyl-5-(2-phosphooxyethyl)-thiazole + ADP + H(+). Its pathway is cofactor biosynthesis; thiamine diphosphate biosynthesis; 4-methyl-5-(2-phosphoethyl)-thiazole from 5-(2-hydroxyethyl)-4-methylthiazole: step 1/1. In terms of biological role, catalyzes the phosphorylation of the hydroxyl group of 4-methyl-5-beta-hydroxyethylthiazole (THZ). The protein is Hydroxyethylthiazole kinase of Listeria monocytogenes serotype 4b (strain F2365).